A 582-amino-acid polypeptide reads, in one-letter code: MAKKKKSNATNAARLLESSISPIVEIKYPEPLFTIAAHPTKPILLSGLATGHIYCSTYDADILEEAQSTKREKLSLLEKEAFKTGKIAHINRSVSQSKQKWWTVIEDNADIPDGSNIVNNWKTKRHKGSCRSAIFDPLENSLGENIYSVGTDHIIKKANTETGKVLSKATISEHYSDKNDAITKLVHSTSHPFLLSGTENGDVLVYDSNNMASNQLKFNVSKAHDDSINHILPMPAVSAYHYLTLGSTTLSHIDIRKGIITQSDDQEDELLSMCFASDHVNDNKNDTVLVSHGEGIVTIWKNSKNRLMDQLSRIKVNKEASIDAIIPTMNCDDGEMVDSVWCGDSEGLLHRINYKKGKVVETRVHSSAAGKHGPADEVGILDIDYDYRLISAGMDSLKIWSNQEETLNSDSDDSDSDDSDSDIGSNDSEDSDSDDDDVAINNKIEDEVNDFSPDSDSETGNDDSDENLEDVADSDSNEDQIENVTDEEHQLSDTELPTKSLQIIRKKRFNVPEISNKTNINKKVVDINKLTKEQSTKKADEEPEETEEPDKKKQKLKAKQMSTKQIRNMQKHEHGIRRFDDL.

WD repeat units follow at residues 27–68, 125–168, 177–216, 265–310, and 373–410; these read KYPE…EAQS, RHKG…VLSK, DKND…SNQL, DQED…LMDQ, and GPAD…LNSD. Disordered stretches follow at residues 405 to 496 and 531 to 582; these read ETLN…DTEL and TKEQ…FDDL. Acidic residues-rich tracts occupy residues 410–438 and 447–485; these read DSDD…DDDV and EVND…ENVT. Composition is skewed to basic and acidic residues over residues 531–540 and 570–582; these read TKEQSTKKAD and QKHE…FDDL.

The protein belongs to the WD repeat WDR55 family.

It localises to the nucleus. The protein resides in the nucleolus. The sequence is that of WD repeat-containing protein JIP5 (JIP5) from Debaryomyces hansenii (strain ATCC 36239 / CBS 767 / BCRC 21394 / JCM 1990 / NBRC 0083 / IGC 2968) (Yeast).